The primary structure comprises 254 residues: Kallikrein-4 (254 aa).

An N-terminal signal peptide occupies residues 1 to 26 (MATAGNPWGWFLGYLILGVAGSLVSG). A propeptide spanning residues 27–30 (SCSQ) is cleaved from the precursor. The Peptidase S1 domain maps to 31–252 (IINGEDCSPH…FTEWIEKTVQ (222 aa)). 6 disulfides stabilise this stretch: cysteine 37/cysteine 167, cysteine 56/cysteine 72, cysteine 141/cysteine 241, cysteine 148/cysteine 213, cysteine 178/cysteine 192, and cysteine 203/cysteine 228. Histidine 40 lines the Zn(2+) pocket. Catalysis depends on histidine 71, which acts as the Charge relay system. Glutamate 91 contacts Zn(2+). The active-site Charge relay system is the aspartate 116. N-linked (GlcNAc...) asparagine glycosylation is present at asparagine 169. Serine 207 acts as the Charge relay system in catalysis.

It belongs to the peptidase S1 family. Kallikrein subfamily. N-glycosylated. The N-glycan structures are of complex diantennary or triantennary type, which may be further modified with up to 2 sialic acid residues. Expressed in prostate.

It localises to the secreted. Its function is as follows. Has a major role in enamel formation. Required during the maturation stage of tooth development for clearance of enamel proteins and normal structural patterning of the crystalline matrix. In Homo sapiens (Human), this protein is Kallikrein-4 (KLK4).